The following is a 142-amino-acid chain: Hemoglobin subunit alpha (142 aa).

The 141-residue stretch at 2–142 (VLSAADKTNV…VSTVLTSKYR (141 aa)) folds into the Globin domain. Position 4 is a phosphoserine (serine 4). Lysine 8 bears the N6-succinyllysine mark. Position 9 is a phosphothreonine (threonine 9). An N6-succinyllysine modification is found at lysine 12. At lysine 17 the chain carries N6-acetyllysine; alternate. Lysine 17 carries the post-translational modification N6-succinyllysine; alternate. Lysine 41 carries the post-translational modification N6-succinyllysine. Serine 50 is modified (phosphoserine). Position 59 (histidine 59) interacts with O2. Histidine 88 is a heme b binding site. Serine 103 is subject to Phosphoserine. Threonine 109 is subject to Phosphothreonine. Serine 125 carries the phosphoserine modification. 2 positions are modified to phosphothreonine: threonine 135 and threonine 138. Serine 139 carries the post-translational modification Phosphoserine.

Belongs to the globin family. In terms of assembly, heterotetramer of two alpha chains and two beta chains. Red blood cells.

Its function is as follows. Involved in oxygen transport from the lung to the various peripheral tissues. Hemopressin acts as an antagonist peptide of the cannabinoid receptor CNR1. Hemopressin-binding efficiently blocks cannabinoid receptor CNR1 and subsequent signaling. This is Hemoglobin subunit alpha (HBA) from Equus zebra (Mountain zebra).